A 227-amino-acid polypeptide reads, in one-letter code: Lipoprotein-releasing system ATP-binding protein LolD (227 aa).

One can recognise an ABC transporter domain in the interval 6 to 227; sequence LEMRGITKSY…RLDAGQLSDV (222 aa). An ATP-binding site is contributed by 43–50; sequence APSGAGKS.

It belongs to the ABC transporter superfamily. Lipoprotein translocase (TC 3.A.1.125) family. The complex is composed of two ATP-binding proteins (LolD) and two transmembrane proteins (LolC and LolE).

Its subcellular location is the cell inner membrane. Functionally, part of the ABC transporter complex LolCDE involved in the translocation of mature outer membrane-directed lipoproteins, from the inner membrane to the periplasmic chaperone, LolA. Responsible for the formation of the LolA-lipoprotein complex in an ATP-dependent manner. This chain is Lipoprotein-releasing system ATP-binding protein LolD, found in Roseobacter denitrificans (strain ATCC 33942 / OCh 114) (Erythrobacter sp. (strain OCh 114)).